Reading from the N-terminus, the 157-residue chain is Peptide methionine sulfoxide reductase MsrA (157 aa).

Cysteine 13 is a catalytic residue.

It belongs to the MsrA Met sulfoxide reductase family.

The enzyme catalyses L-methionyl-[protein] + [thioredoxin]-disulfide + H2O = L-methionyl-(S)-S-oxide-[protein] + [thioredoxin]-dithiol. The catalysed reaction is [thioredoxin]-disulfide + L-methionine + H2O = L-methionine (S)-S-oxide + [thioredoxin]-dithiol. In terms of biological role, has an important function as a repair enzyme for proteins that have been inactivated by oxidation. Catalyzes the reversible oxidation-reduction of methionine sulfoxide in proteins to methionine. The chain is Peptide methionine sulfoxide reductase MsrA from Methanococcus maripaludis (strain C7 / ATCC BAA-1331).